Consider the following 112-residue polypeptide: Large ribosomal subunit protein P1w (112 aa).

Residues 85–112 are disordered; that stretch reads AAAPAAEEKKKDEPAEESDGDLGFGLFD. At serine 102 the chain carries Phosphoserine.

Belongs to the eukaryotic ribosomal protein P1/P2 family. P1 and P2 exist as dimers at the large ribosomal subunit.

Its function is as follows. Plays an important role in the elongation step of protein synthesis. The protein is Large ribosomal subunit protein P1w (RPP1A) of Arabidopsis thaliana (Mouse-ear cress).